Reading from the N-terminus, the 515-residue chain is Cytochrome P450 705A22 (515 aa).

Residues 9–29 traverse the membrane as a helical segment; it reads FQNCFIFILIFLLTFLCFFFF. Cys454 contacts heme.

This sequence belongs to the cytochrome P450 family. The cofactor is heme.

It localises to the membrane. Its function is as follows. Plays a role in the gravitropic response of the inflorescence stems and roots. May affect the synthesis of flavonols that have a role in regulating auxin transport. The chain is Cytochrome P450 705A22 from Arabidopsis thaliana (Mouse-ear cress).